Reading from the N-terminus, the 276-residue chain is NH(3)-dependent NAD(+) synthetase (276 aa).

43 to 50 contacts ATP; it reads GISGGVDS. Asp-49 provides a ligand contact to Mg(2+). Arg-146 is a deamido-NAD(+) binding site. Thr-166 is a binding site for ATP. Mg(2+) is bound at residue Glu-171. Deamido-NAD(+)-binding residues include Lys-179 and Asp-186. The ATP site is built by Lys-195 and Thr-217. 266–267 lines the deamido-NAD(+) pocket; sequence HK.

This sequence belongs to the NAD synthetase family. As to quaternary structure, homodimer.

It catalyses the reaction deamido-NAD(+) + NH4(+) + ATP = AMP + diphosphate + NAD(+) + H(+). The protein operates within cofactor biosynthesis; NAD(+) biosynthesis; NAD(+) from deamido-NAD(+) (ammonia route): step 1/1. Functionally, catalyzes the ATP-dependent amidation of deamido-NAD to form NAD. Uses ammonia as a nitrogen source. The sequence is that of NH(3)-dependent NAD(+) synthetase from Aliivibrio fischeri (strain ATCC 700601 / ES114) (Vibrio fischeri).